The following is a 513-amino-acid chain: ATP synthase subunit alpha (513 aa).

Glycine 169–threonine 176 provides a ligand contact to ATP.

The protein belongs to the ATPase alpha/beta chains family. As to quaternary structure, F-type ATPases have 2 components, CF(1) - the catalytic core - and CF(0) - the membrane proton channel. CF(1) has five subunits: alpha(3), beta(3), gamma(1), delta(1), epsilon(1). CF(0) has three main subunits: a(1), b(2) and c(9-12). The alpha and beta chains form an alternating ring which encloses part of the gamma chain. CF(1) is attached to CF(0) by a central stalk formed by the gamma and epsilon chains, while a peripheral stalk is formed by the delta and b chains.

It localises to the cell inner membrane. It catalyses the reaction ATP + H2O + 4 H(+)(in) = ADP + phosphate + 5 H(+)(out). Its function is as follows. Produces ATP from ADP in the presence of a proton gradient across the membrane. The alpha chain is a regulatory subunit. The polypeptide is ATP synthase subunit alpha (Francisella tularensis subsp. tularensis (strain WY96-3418)).